The following is a 225-amino-acid chain: Iron-sulfur flavoprotein CD630_04720 (225 aa).

The [4Fe-4S] cluster site is built by C49, C52, C55, and C61.

This sequence belongs to the SsuE family. Isf subfamily. Homodimer. FMN serves as cofactor. Requires [4Fe-4S] cluster as cofactor.

Its function is as follows. Redox-active protein probably involved in electron transport. The protein is Iron-sulfur flavoprotein CD630_04720 of Clostridioides difficile (strain 630) (Peptoclostridium difficile).